Reading from the N-terminus, the 134-residue chain is Small ribosomal subunit protein uS8c (134 aa).

This sequence belongs to the universal ribosomal protein uS8 family. In terms of assembly, part of the 30S ribosomal subunit.

It localises to the plastid. Its subcellular location is the chloroplast. In terms of biological role, one of the primary rRNA binding proteins, it binds directly to 16S rRNA central domain where it helps coordinate assembly of the platform of the 30S subunit. This chain is Small ribosomal subunit protein uS8c (rps8), found in Arabidopsis thaliana (Mouse-ear cress).